We begin with the raw amino-acid sequence, 279 residues long: Glutamate racemase (279 aa).

Substrate-binding positions include 13–14 and 45–46; these read DS and YG. Cys76 functions as the Proton donor/acceptor in the catalytic mechanism. A substrate-binding site is contributed by 77 to 78; the sequence is NT. The active-site Proton donor/acceptor is the Cys185. Residue 186–187 participates in substrate binding; the sequence is TH.

It belongs to the aspartate/glutamate racemases family.

It catalyses the reaction L-glutamate = D-glutamate. Its pathway is cell wall biogenesis; peptidoglycan biosynthesis. In terms of biological role, provides the (R)-glutamate required for cell wall biosynthesis. In Picosynechococcus sp. (strain ATCC 27264 / PCC 7002 / PR-6) (Agmenellum quadruplicatum), this protein is Glutamate racemase.